Consider the following 105-residue polypeptide: UPF0235 protein RF_1332 (105 aa).

This sequence belongs to the UPF0235 family.

This chain is UPF0235 protein RF_1332, found in Rickettsia felis (strain ATCC VR-1525 / URRWXCal2) (Rickettsia azadi).